The primary structure comprises 258 residues: ATP synthase subunit a (258 aa).

5 consecutive transmembrane segments (helical) span residues 38-58 (KPVW…YVGA), 94-114 (WFPY…IGLF), 118-138 (YPVT…FVLT), 193-213 (ILAG…FGLP), and 215-235 (AFVS…VAVI).

Belongs to the ATPase A chain family. In terms of assembly, F-type ATPases have 2 components, CF(1) - the catalytic core - and CF(0) - the membrane proton channel. CF(1) has five subunits: alpha(3), beta(3), gamma(1), delta(1), epsilon(1). CF(0) has three main subunits: a(1), b(2) and c(9-12). The alpha and beta chains form an alternating ring which encloses part of the gamma chain. CF(1) is attached to CF(0) by a central stalk formed by the gamma and epsilon chains, while a peripheral stalk is formed by the delta and b chains.

It localises to the cell membrane. In terms of biological role, key component of the proton channel; it plays a direct role in the translocation of protons across the membrane. The polypeptide is ATP synthase subunit a (Rubrobacter xylanophilus (strain DSM 9941 / JCM 11954 / NBRC 16129 / PRD-1)).